The primary structure comprises 368 residues: Ferredoxin--NADP reductase (368 aa).

Asp-56, Gln-64, Tyr-69, Val-109, Phe-144, Asp-310, and Thr-351 together coordinate FAD.

This sequence belongs to the ferredoxin--NADP reductase type 2 family. Homodimer. The cofactor is FAD.

It carries out the reaction 2 reduced [2Fe-2S]-[ferredoxin] + NADP(+) + H(+) = 2 oxidized [2Fe-2S]-[ferredoxin] + NADPH. This Leptothrix cholodnii (strain ATCC 51168 / LMG 8142 / SP-6) (Leptothrix discophora (strain SP-6)) protein is Ferredoxin--NADP reductase.